The chain runs to 510 residues: Ferredoxin--nitrite reductase (510 aa).

Residues cysteine 396, cysteine 402, cysteine 437, and cysteine 441 each coordinate [4Fe-4S] cluster. Cysteine 441 is a binding site for siroheme.

It belongs to the nitrite and sulfite reductase 4Fe-4S domain family.

The enzyme catalyses 6 oxidized [2Fe-2S]-[ferredoxin] + NH4(+) + 2 H2O = nitrite + 6 reduced [2Fe-2S]-[ferredoxin] + 8 H(+). This Leptolyngbya laminosa (Phormidium laminosum) protein is Ferredoxin--nitrite reductase (nirA).